We begin with the raw amino-acid sequence, 481 residues long: Pyruvate kinase (481 aa).

Position 36 (R36) interacts with substrate. Positions 38, 40, and 70 each coordinate K(+). ATP is bound at residue 38-41 (NFSH). Residues R77 and K160 each coordinate ATP. E225 lines the Mg(2+) pocket. 3 residues coordinate substrate: G251, D252, and T284. D252 contacts Mg(2+).

Belongs to the pyruvate kinase family. As to quaternary structure, homotetramer. The cofactor is Mg(2+). It depends on K(+) as a cofactor.

The catalysed reaction is pyruvate + ATP = phosphoenolpyruvate + ADP + H(+). It participates in carbohydrate degradation; glycolysis; pyruvate from D-glyceraldehyde 3-phosphate: step 5/5. Allosterically activated by AMP and by several sugar phosphates. Belongs to type II PK. The sequence is that of Pyruvate kinase (pykA) from Buchnera aphidicola subsp. Schizaphis graminum (strain Sg).